Consider the following 115-residue polypeptide: Variant surface glycoprotein ANTAT 1.8 (115 aa).

N-linked (GlcNAc...) asparagine glycosylation is present at Asn-42. Asp-92 is lipidated: GPI-anchor amidated aspartate. Residues 93-115 (SSILVNKQLALSVVSAAFAALLF) constitute a propeptide, removed in mature form.

Its subcellular location is the cell membrane. Its function is as follows. VSG forms a coat on the surface of the parasite. The trypanosome evades the immune response of the host by expressing a series of antigenically distinct VSGs from an estimated 1000 VSG genes. The protein is Variant surface glycoprotein ANTAT 1.8 of Trypanosoma brucei brucei.